The sequence spans 586 residues: Alanine racemase ungC (586 aa).

Residues 187–206 form a disordered region; it reads RVGALPAAASTASPMGSSLP. Positions 196–206 are enriched in polar residues; sequence STASPMGSSLP.

Belongs to the trans-sulfuration enzymes family. It depends on pyridoxal 5'-phosphate as a cofactor.

The catalysed reaction is L-alanine = D-alanine. Its pathway is secondary metabolite biosynthesis. Alanine racemase; part of the gene cluster that mediates the biosynthesis of the unguisins, gamma-aminobutyric acid (GABA)-containing fungal cyclic heptapeptides with the amino acid sequence cyclo-(D-Ala1-D-Val2-L-Phe3-D-Val4-D-Ala5-D-Trp6-GABA7) for unguisin A and cyclo-(D-Ala1-D-Val2-L-Leu3-D-Val4-D-Ala5-D-Trp6-GABA7) for unguisin B. Within the pathway, the alanine racemase ungC catalyzes the interconversion of L-alanine and D-alanine, providing the D-alanine which is accepted by the first adenylation domain of the nonribosomal peptide synthetase (NRPS) ungA. UngA is the main enzyme within the cluster which condenses the 7 residues using its respective 7 modules. The terminal condensation domain (Ct) is involved in cyclization with D-alanine and thereby releasing of unguisins A and B. Finally, the hydrolase ungD catalyzes the hydrolysis between the D-tryptophan and GABA residues of unguisins A and B to produce the corresponding linear peptides. The polypeptide is Alanine racemase ungC (Aspergillus violaceofuscus (strain CBS 115571)).